We begin with the raw amino-acid sequence, 243 residues long: Probable transcriptional regulatory protein LJ_0904 (243 aa).

A disordered region spans residues 1–22; the sequence is MSGHSKWHNIQGRKNAQDAKRG.

This sequence belongs to the TACO1 family.

The protein localises to the cytoplasm. This chain is Probable transcriptional regulatory protein LJ_0904, found in Lactobacillus johnsonii (strain CNCM I-12250 / La1 / NCC 533).